A 258-amino-acid chain; its full sequence is Regulatory protein RecX (258 aa).

It belongs to the RecX family.

The protein localises to the cytoplasm. Modulates RecA activity. The chain is Regulatory protein RecX from Streptococcus pneumoniae serotype 19F (strain G54).